We begin with the raw amino-acid sequence, 309 residues long: Type II methyltransferase M.HindIII (309 aa).

It belongs to the N(4)/N(6)-methyltransferase family.

It catalyses the reaction a 2'-deoxyadenosine in DNA + S-adenosyl-L-methionine = an N(6)-methyl-2'-deoxyadenosine in DNA + S-adenosyl-L-homocysteine + H(+). In terms of biological role, a beta subtype methylase that recognizes the double-stranded sequence 5'-AAGCTT-3', methylates A-1 on both strands, and protects the DNA from cleavage by the HindIII endonuclease. The protein is Type II methyltransferase M.HindIII of Haemophilus influenzae (strain ATCC 51907 / DSM 11121 / KW20 / Rd).